A 116-amino-acid polypeptide reads, in one-letter code: Putative iron-sulfur cluster insertion protein ErpA (116 aa).

C44, C108, and C110 together coordinate iron-sulfur cluster.

The protein belongs to the HesB/IscA family. In terms of assembly, homodimer. Iron-sulfur cluster is required as a cofactor.

Functionally, required for insertion of 4Fe-4S clusters. In Thiobacillus denitrificans (strain ATCC 25259 / T1), this protein is Putative iron-sulfur cluster insertion protein ErpA.